The sequence spans 364 residues: D-alanine--D-alanine ligase (364 aa).

One can recognise an ATP-grasp domain in the interval 145 to 354 (KMAFEQAGLP…FPELVDKLVQ (210 aa)). 181 to 236 (EASLGYPCFVKPANLGSSVGISKVRSRQELEDALDNAANYDRRIIIEAGVAAREVE) lines the ATP pocket. 3 residues coordinate Mg(2+): Asp307, Glu321, and Asn323.

The protein belongs to the D-alanine--D-alanine ligase family. Mg(2+) serves as cofactor. Requires Mn(2+) as cofactor.

Its subcellular location is the cytoplasm. The catalysed reaction is 2 D-alanine + ATP = D-alanyl-D-alanine + ADP + phosphate + H(+). It functions in the pathway cell wall biogenesis; peptidoglycan biosynthesis. Cell wall formation. The protein is D-alanine--D-alanine ligase of Nostoc sp. (strain PCC 7120 / SAG 25.82 / UTEX 2576).